A 348-amino-acid chain; its full sequence is Beta-hexosaminidase (348 aa).

Residues D64, R72, R138, and 168–169 contribute to the substrate site; that span reads KH. H181 serves as the catalytic Proton donor/acceptor. D252 acts as the Nucleophile in catalysis.

It belongs to the glycosyl hydrolase 3 family. NagZ subfamily.

The protein resides in the cytoplasm. The enzyme catalyses Hydrolysis of terminal non-reducing N-acetyl-D-hexosamine residues in N-acetyl-beta-D-hexosaminides.. The protein operates within cell wall biogenesis; peptidoglycan recycling. Plays a role in peptidoglycan recycling by cleaving the terminal beta-1,4-linked N-acetylglucosamine (GlcNAc) from peptide-linked peptidoglycan fragments, giving rise to free GlcNAc, anhydro-N-acetylmuramic acid and anhydro-N-acetylmuramic acid-linked peptides. In Alkalilimnicola ehrlichii (strain ATCC BAA-1101 / DSM 17681 / MLHE-1), this protein is Beta-hexosaminidase.